Reading from the N-terminus, the 475-residue chain is Isocitrate dehydrogenase [NADP] (475 aa).

Thr-104 provides a ligand contact to NADP(+). D-threo-isocitrate is bound by residues Ser-113, Asn-115, Arg-119, Arg-129, and Arg-153. Mg(2+) is bound at residue Asp-362. NADP(+)-binding positions include 394–400 (HGTAPKH), Asn-407, Tyr-446, and Arg-450.

Belongs to the isocitrate and isopropylmalate dehydrogenases family. Homodimer. It depends on Mg(2+) as a cofactor. Requires Mn(2+) as cofactor.

The protein localises to the cytoplasm. The enzyme catalyses D-threo-isocitrate + NADP(+) = 2-oxoglutarate + CO2 + NADPH. Its activity is regulated as follows. Inhibited non-competitively by ADP and 2-oxoglutarate, with respect to isocitrate and in a competitive manner by NADPH. Functionally, catalyzes the oxidative decarboxylation of isocitrate to 2-oxoglutarate and carbon dioxide with the concomitant reduction of NADP(+). Is specific for NADP(+), cannot use NAD(+). This is Isocitrate dehydrogenase [NADP] from Synechocystis sp. (strain ATCC 27184 / PCC 6803 / Kazusa).